Reading from the N-terminus, the 141-residue chain is Nucleoside diphosphate kinase (141 aa).

Lys-11, Phe-59, Arg-87, Thr-93, Arg-104, and Asn-114 together coordinate ATP. His-117 serves as the catalytic Pros-phosphohistidine intermediate.

Belongs to the NDK family. In terms of assembly, homotetramer. It depends on Mg(2+) as a cofactor.

It localises to the cytoplasm. The catalysed reaction is a 2'-deoxyribonucleoside 5'-diphosphate + ATP = a 2'-deoxyribonucleoside 5'-triphosphate + ADP. The enzyme catalyses a ribonucleoside 5'-diphosphate + ATP = a ribonucleoside 5'-triphosphate + ADP. Functionally, major role in the synthesis of nucleoside triphosphates other than ATP. The ATP gamma phosphate is transferred to the NDP beta phosphate via a ping-pong mechanism, using a phosphorylated active-site intermediate. In Serratia proteamaculans (strain 568), this protein is Nucleoside diphosphate kinase.